The chain runs to 316 residues: Probable cell division protein WhiA (316 aa).

Positions 275–309 (TLKELGEMVSGGKISKSGINHRLRKIDEIAEKLRA) form a DNA-binding region, H-T-H motif.

Belongs to the WhiA family.

In terms of biological role, involved in cell division and chromosome segregation. This chain is Probable cell division protein WhiA, found in Bacillus cereus (strain G9842).